Consider the following 213-residue polypeptide: ATP phosphoribosyltransferase (213 aa).

Belongs to the ATP phosphoribosyltransferase family. Short subfamily. In terms of assembly, heteromultimer composed of HisG and HisZ subunits.

It is found in the cytoplasm. It catalyses the reaction 1-(5-phospho-beta-D-ribosyl)-ATP + diphosphate = 5-phospho-alpha-D-ribose 1-diphosphate + ATP. Its pathway is amino-acid biosynthesis; L-histidine biosynthesis; L-histidine from 5-phospho-alpha-D-ribose 1-diphosphate: step 1/9. In terms of biological role, catalyzes the condensation of ATP and 5-phosphoribose 1-diphosphate to form N'-(5'-phosphoribosyl)-ATP (PR-ATP). Has a crucial role in the pathway because the rate of histidine biosynthesis seems to be controlled primarily by regulation of HisG enzymatic activity. The sequence is that of ATP phosphoribosyltransferase from Saccharophagus degradans (strain 2-40 / ATCC 43961 / DSM 17024).